We begin with the raw amino-acid sequence, 210 residues long: Large ribosomal subunit protein bL25 (210 aa).

Belongs to the bacterial ribosomal protein bL25 family. CTC subfamily. Part of the 50S ribosomal subunit; part of the 5S rRNA/L5/L18/L25 subcomplex. Contacts the 5S rRNA. Binds to the 5S rRNA independently of L5 and L18.

Functionally, this is one of the proteins that binds to the 5S RNA in the ribosome where it forms part of the central protuberance. In Frankia casuarinae (strain DSM 45818 / CECT 9043 / HFP020203 / CcI3), this protein is Large ribosomal subunit protein bL25.